We begin with the raw amino-acid sequence, 553 residues long: Formate--tetrahydrofolate ligase (553 aa).

Residue 62-69 participates in ATP binding; sequence TPAGEGKS.

This sequence belongs to the formate--tetrahydrofolate ligase family.

It carries out the reaction (6S)-5,6,7,8-tetrahydrofolate + formate + ATP = (6R)-10-formyltetrahydrofolate + ADP + phosphate. Its pathway is one-carbon metabolism; tetrahydrofolate interconversion. This chain is Formate--tetrahydrofolate ligase, found in Pediococcus pentosaceus (strain ATCC 25745 / CCUG 21536 / LMG 10740 / 183-1w).